The sequence spans 513 residues: ATP synthase subunit alpha (513 aa).

Gly169–Thr176 serves as a coordination point for ATP.

The protein belongs to the ATPase alpha/beta chains family. F-type ATPases have 2 components, CF(1) - the catalytic core - and CF(0) - the membrane proton channel. CF(1) has five subunits: alpha(3), beta(3), gamma(1), delta(1), epsilon(1). CF(0) has three main subunits: a(1), b(2) and c(9-12). The alpha and beta chains form an alternating ring which encloses part of the gamma chain. CF(1) is attached to CF(0) by a central stalk formed by the gamma and epsilon chains, while a peripheral stalk is formed by the delta and b chains.

It localises to the cell inner membrane. It catalyses the reaction ATP + H2O + 4 H(+)(in) = ADP + phosphate + 5 H(+)(out). Its function is as follows. Produces ATP from ADP in the presence of a proton gradient across the membrane. The alpha chain is a regulatory subunit. The polypeptide is ATP synthase subunit alpha (Actinobacillus pleuropneumoniae serotype 3 (strain JL03)).